A 209-amino-acid polypeptide reads, in one-letter code: Ras-like protein (209 aa).

15-22 (GGGGEGKS) serves as a coordination point for GTP. Residues 37–45 (YDPTIEESY) carry the Effector region motif. GTP is bound by residues 62-66 (DTAGQ) and 121-124 (NKCD). S-palmitoyl cysteine attachment occurs at residues cysteine 202 and cysteine 203. The residue at position 206 (cysteine 206) is a Cysteine methyl ester. Cysteine 206 carries S-geranylgeranyl cysteine lipidation. Positions 207–209 (IVM) are cleaved as a propeptide — removed in mature form.

It belongs to the small GTPase superfamily. Ras family.

The protein localises to the cell membrane. It catalyses the reaction GTP + H2O = GDP + phosphate + H(+). Alternates between an inactive form bound to GDP and an active form bound to GTP. Activated by a guanine nucleotide-exchange factor (GEF) and inactivated by a GTPase-activating protein (GAP). In Laccaria bicolor (Bicoloured deceiver), this protein is Ras-like protein.